Here is a 489-residue protein sequence, read N- to C-terminus: Glycogen synthase (489 aa).

Arg20 contacts ADP-alpha-D-glucose.

It belongs to the glycosyltransferase 1 family. Bacterial/plant glycogen synthase subfamily.

The catalysed reaction is [(1-&gt;4)-alpha-D-glucosyl](n) + ADP-alpha-D-glucose = [(1-&gt;4)-alpha-D-glucosyl](n+1) + ADP + H(+). It functions in the pathway glycan biosynthesis; glycogen biosynthesis. In terms of biological role, synthesizes alpha-1,4-glucan chains using ADP-glucose. In Chlorobium phaeovibrioides (strain DSM 265 / 1930) (Prosthecochloris vibrioformis (strain DSM 265)), this protein is Glycogen synthase.